A 753-amino-acid chain; its full sequence is 5-methyltetrahydropteroyltriglutamate--homocysteine methyltransferase (753 aa).

5-methyltetrahydropteroyltri-L-glutamate is bound by residues R17–K20 and K117. L-homocysteine is bound by residues I431–S433 and E484. L-methionine contacts are provided by residues I431–S433 and E484. 5-methyltetrahydropteroyltri-L-glutamate is bound by residues R515–C516 and W561. D599 provides a ligand contact to L-homocysteine. Residue D599 coordinates L-methionine. E605 contributes to the 5-methyltetrahydropteroyltri-L-glutamate binding site. The Zn(2+) site is built by H641, C643, and E665. The active-site Proton donor is the H694. Zn(2+) is bound at residue C726.

This sequence belongs to the vitamin-B12 independent methionine synthase family. The cofactor is Zn(2+).

The enzyme catalyses 5-methyltetrahydropteroyltri-L-glutamate + L-homocysteine = tetrahydropteroyltri-L-glutamate + L-methionine. The protein operates within amino-acid biosynthesis; L-methionine biosynthesis via de novo pathway; L-methionine from L-homocysteine (MetE route): step 1/1. Functionally, catalyzes the transfer of a methyl group from 5-methyltetrahydrofolate to homocysteine resulting in methionine formation. The sequence is that of 5-methyltetrahydropteroyltriglutamate--homocysteine methyltransferase from Enterobacter sp. (strain 638).